The following is a 386-amino-acid chain: Lipid-A-disaccharide synthase (386 aa).

The protein belongs to the LpxB family.

The enzyme catalyses a lipid X + a UDP-2-N,3-O-bis[(3R)-3-hydroxyacyl]-alpha-D-glucosamine = a lipid A disaccharide + UDP + H(+). The protein operates within bacterial outer membrane biogenesis; LPS lipid A biosynthesis. Its function is as follows. Condensation of UDP-2,3-diacylglucosamine and 2,3-diacylglucosamine-1-phosphate to form lipid A disaccharide, a precursor of lipid A, a phosphorylated glycolipid that anchors the lipopolysaccharide to the outer membrane of the cell. The polypeptide is Lipid-A-disaccharide synthase (Chromohalobacter salexigens (strain ATCC BAA-138 / DSM 3043 / CIP 106854 / NCIMB 13768 / 1H11)).